The following is a 1486-amino-acid chain: Chromosome partition protein MukB (1486 aa).

Position 34-41 (Gly34–Ser41) interacts with ATP. Coiled-coil stretches lie at residues Leu326–Gln418, Leu444–Gln480, and Arg509–Val603. Positions Pro666–Arg783 are flexible hinge. Coiled-coil stretches lie at residues Glu835–Glu923, Glu977–Ala1115, and Val1209–Ser1266.

This sequence belongs to the SMC family. MukB subfamily. Homodimerization via its hinge domain. Binds to DNA via its C-terminal region. Interacts, and probably forms a ternary complex, with MukE and MukF via its C-terminal region. The complex formation is stimulated by calcium or magnesium. Interacts with tubulin-related protein FtsZ.

Its subcellular location is the cytoplasm. The protein localises to the nucleoid. In terms of biological role, plays a central role in chromosome condensation, segregation and cell cycle progression. Functions as a homodimer, which is essential for chromosome partition. Involved in negative DNA supercoiling in vivo, and by this means organize and compact chromosomes. May achieve or facilitate chromosome segregation by condensation DNA from both sides of a centrally located replisome during cell division. The sequence is that of Chromosome partition protein MukB from Shigella boydii serotype 18 (strain CDC 3083-94 / BS512).